A 963-amino-acid chain; its full sequence is Bifunctional glutamine synthetase adenylyltransferase/adenylyl-removing enzyme (963 aa).

The tract at residues 1 to 451 is adenylyl removase; the sequence is MAAPSELQLY…EHFADIIAER (451 aa). Residues 461–963 form an adenylyl transferase region; it reads TIEWKALWAG…VAFWEKVFAE (503 aa).

This sequence belongs to the GlnE family. It depends on Mg(2+) as a cofactor.

The enzyme catalyses [glutamine synthetase]-O(4)-(5'-adenylyl)-L-tyrosine + phosphate = [glutamine synthetase]-L-tyrosine + ADP. It carries out the reaction [glutamine synthetase]-L-tyrosine + ATP = [glutamine synthetase]-O(4)-(5'-adenylyl)-L-tyrosine + diphosphate. Functionally, involved in the regulation of glutamine synthetase GlnA, a key enzyme in the process to assimilate ammonia. When cellular nitrogen levels are high, the C-terminal adenylyl transferase (AT) inactivates GlnA by covalent transfer of an adenylyl group from ATP to specific tyrosine residue of GlnA, thus reducing its activity. Conversely, when nitrogen levels are low, the N-terminal adenylyl removase (AR) activates GlnA by removing the adenylyl group by phosphorolysis, increasing its activity. The regulatory region of GlnE binds the signal transduction protein PII (GlnB) which indicates the nitrogen status of the cell. The polypeptide is Bifunctional glutamine synthetase adenylyltransferase/adenylyl-removing enzyme (Hahella chejuensis (strain KCTC 2396)).